A 249-amino-acid chain; its full sequence is Small ribosomal subunit protein uS2 (249 aa).

The protein belongs to the universal ribosomal protein uS2 family.

The sequence is that of Small ribosomal subunit protein uS2 from Polynucleobacter asymbioticus (strain DSM 18221 / CIP 109841 / QLW-P1DMWA-1) (Polynucleobacter necessarius subsp. asymbioticus).